We begin with the raw amino-acid sequence, 214 residues long: Methylthioribulose-1-phosphate dehydratase (214 aa).

Residues H103 and H105 each coordinate Zn(2+).

The protein belongs to the aldolase class II family. MtnB subfamily. Zn(2+) is required as a cofactor.

It catalyses the reaction 5-(methylsulfanyl)-D-ribulose 1-phosphate = 5-methylsulfanyl-2,3-dioxopentyl phosphate + H2O. Its pathway is amino-acid biosynthesis; L-methionine biosynthesis via salvage pathway; L-methionine from S-methyl-5-thio-alpha-D-ribose 1-phosphate: step 2/6. Functionally, catalyzes the dehydration of methylthioribulose-1-phosphate (MTRu-1-P) into 2,3-diketo-5-methylthiopentyl-1-phosphate (DK-MTP-1-P). This Granulibacter bethesdensis (strain ATCC BAA-1260 / CGDNIH1) protein is Methylthioribulose-1-phosphate dehydratase.